Here is a 367-residue protein sequence, read N- to C-terminus: tRNA-specific 2-thiouridylase MnmA (367 aa).

ATP-binding positions include 13–20 (GLSGGVDS) and M39. Residues 99–101 (NPD) are interaction with target base in tRNA. The Nucleophile role is filled by C104. Cysteines 104 and 200 form a disulfide. G128 contacts ATP. The interval 150–152 (KDQ) is interaction with tRNA. The Cysteine persulfide intermediate role is filled by C200. An interaction with tRNA region spans residues 307–308 (RY).

This sequence belongs to the MnmA/TRMU family.

It is found in the cytoplasm. It catalyses the reaction S-sulfanyl-L-cysteinyl-[protein] + uridine(34) in tRNA + AH2 + ATP = 2-thiouridine(34) in tRNA + L-cysteinyl-[protein] + A + AMP + diphosphate + H(+). Catalyzes the 2-thiolation of uridine at the wobble position (U34) of tRNA, leading to the formation of s(2)U34. The sequence is that of tRNA-specific 2-thiouridylase MnmA from Neisseria meningitidis serogroup C (strain 053442).